The chain runs to 427 residues: Putative zinc protease AlbF (427 aa).

His-66 lines the Zn(2+) pocket. Glu-69 serves as the catalytic Proton acceptor. Zn(2+) contacts are provided by His-70 and Glu-142.

It belongs to the peptidase M16 family. The cofactor is Zn(2+).

Its function is as follows. Required for production of the bacteriocin subtilosin. Could catalyze some step in the processing of presubtilosin. The sequence is that of Putative zinc protease AlbF (albF) from Bacillus subtilis.